The chain runs to 283 residues: 4-diphosphocytidyl-2-C-methyl-D-erythritol kinase (283 aa).

Lysine 10 is an active-site residue. Residue 95–105 (PVAAGLGGGSS) coordinates ATP. Residue aspartate 137 is part of the active site.

Belongs to the GHMP kinase family. IspE subfamily.

It carries out the reaction 4-CDP-2-C-methyl-D-erythritol + ATP = 4-CDP-2-C-methyl-D-erythritol 2-phosphate + ADP + H(+). It functions in the pathway isoprenoid biosynthesis; isopentenyl diphosphate biosynthesis via DXP pathway; isopentenyl diphosphate from 1-deoxy-D-xylulose 5-phosphate: step 3/6. Catalyzes the phosphorylation of the position 2 hydroxy group of 4-diphosphocytidyl-2C-methyl-D-erythritol. The chain is 4-diphosphocytidyl-2-C-methyl-D-erythritol kinase from Pediococcus pentosaceus (strain ATCC 25745 / CCUG 21536 / LMG 10740 / 183-1w).